A 215-amino-acid polypeptide reads, in one-letter code: Leucyl/phenylalanyl-tRNA--protein transferase (215 aa).

It belongs to the L/F-transferase family.

It localises to the cytoplasm. It carries out the reaction N-terminal L-lysyl-[protein] + L-leucyl-tRNA(Leu) = N-terminal L-leucyl-L-lysyl-[protein] + tRNA(Leu) + H(+). The catalysed reaction is N-terminal L-arginyl-[protein] + L-leucyl-tRNA(Leu) = N-terminal L-leucyl-L-arginyl-[protein] + tRNA(Leu) + H(+). The enzyme catalyses L-phenylalanyl-tRNA(Phe) + an N-terminal L-alpha-aminoacyl-[protein] = an N-terminal L-phenylalanyl-L-alpha-aminoacyl-[protein] + tRNA(Phe). Functions in the N-end rule pathway of protein degradation where it conjugates Leu, Phe and, less efficiently, Met from aminoacyl-tRNAs to the N-termini of proteins containing an N-terminal arginine or lysine. The chain is Leucyl/phenylalanyl-tRNA--protein transferase from Campylobacter jejuni subsp. jejuni serotype O:2 (strain ATCC 700819 / NCTC 11168).